A 319-amino-acid polypeptide reads, in one-letter code: Acetyl-coenzyme A carboxylase carboxyl transferase subunit alpha (319 aa).

The 255-residue stretch at 39–293 (KLEKKVDRMR…HEAIARQLKE (255 aa)) folds into the CoA carboxyltransferase C-terminal domain.

It belongs to the AccA family. As to quaternary structure, acetyl-CoA carboxylase is a heterohexamer composed of biotin carboxyl carrier protein (AccB), biotin carboxylase (AccC) and two subunits each of ACCase subunit alpha (AccA) and ACCase subunit beta (AccD).

Its subcellular location is the cytoplasm. It carries out the reaction N(6)-carboxybiotinyl-L-lysyl-[protein] + acetyl-CoA = N(6)-biotinyl-L-lysyl-[protein] + malonyl-CoA. It functions in the pathway lipid metabolism; malonyl-CoA biosynthesis; malonyl-CoA from acetyl-CoA: step 1/1. Functionally, component of the acetyl coenzyme A carboxylase (ACC) complex. First, biotin carboxylase catalyzes the carboxylation of biotin on its carrier protein (BCCP) and then the CO(2) group is transferred by the carboxyltransferase to acetyl-CoA to form malonyl-CoA. The sequence is that of Acetyl-coenzyme A carboxylase carboxyl transferase subunit alpha from Geobacter sulfurreducens (strain ATCC 51573 / DSM 12127 / PCA).